Here is a 191-residue protein sequence, read N- to C-terminus: uncharacterized protein (191 aa).

4 consecutive transmembrane segments (helical) span residues 12–32 (FAFL…FFTL), 48–68 (LVAL…LTLF), 92–112 (YISV…LLSL), and 168–188 (IFCL…SCAF).

It localises to the membrane. This is an uncharacterized protein from Saccharomyces cerevisiae (strain ATCC 204508 / S288c) (Baker's yeast).